A 315-amino-acid polypeptide reads, in one-letter code: Atrochrysone carboxyl ACP thioesterase (315 aa).

Histidine 95, histidine 97, aspartate 99, and histidine 100 together coordinate Zn(2+). The active-site Proton donor/acceptor is the aspartate 99.

This sequence belongs to the metallo-beta-lactamase superfamily. Zn(2+) serves as cofactor. Endocrocin is specifically produced in conidia.

It catalyses the reaction atrochrysone carboxyl-[ACP] + H2O = atrochrysone carboxylate + holo-[ACP] + H(+). Atrochrysone carboxyl ACP thioesterase; part of the gene cluster that mediates the biosynthesis of endocrocin, a simple anthraquinone interesting for many biotechnological applications. The pathway begins with the synthesis of atrochrysone thioester by the polyketide synthase (PKS) encA. The atrochrysone carboxyl ACP thioesterase encB then breaks the thioester bond and releases the atrochrysone carboxylic acid from encA. The atrochrysone carboxylic acid is then converted to endocrocin anthrone which is further oxidized into endocrocin by the anthrone oxygenase encC. The exact function of encD has not been identified yet, but it negatively regulates endocrocin production, likely through the modification of endocrocin itself. In Aspergillus fumigatus (strain ATCC MYA-4609 / CBS 101355 / FGSC A1100 / Af293) (Neosartorya fumigata), this protein is Atrochrysone carboxyl ACP thioesterase.